A 184-amino-acid chain; its full sequence is Shikimate kinase (184 aa).

An ATP-binding site is contributed by 12 to 17 (GSGKST). Ser-16 serves as a coordination point for Mg(2+). Substrate-binding residues include Asp-34, Arg-58, and Gly-80. Residue Arg-117 coordinates ATP. A substrate-binding site is contributed by Arg-136. Arg-153 contacts ATP. Residues 163 to 184 (MSRLDDPTPNTSPSSTASGAAT) are disordered. Low complexity predominate over residues 169–184 (PTPNTSPSSTASGAAT).

Belongs to the shikimate kinase family. In terms of assembly, monomer. It depends on Mg(2+) as a cofactor.

Its subcellular location is the cytoplasm. The enzyme catalyses shikimate + ATP = 3-phosphoshikimate + ADP + H(+). It participates in metabolic intermediate biosynthesis; chorismate biosynthesis; chorismate from D-erythrose 4-phosphate and phosphoenolpyruvate: step 5/7. Its function is as follows. Catalyzes the specific phosphorylation of the 3-hydroxyl group of shikimic acid using ATP as a cosubstrate. The sequence is that of Shikimate kinase from Mycobacterium marinum (strain ATCC BAA-535 / M).